A 202-amino-acid polypeptide reads, in one-letter code: MGLWRGKSPLILASQSSARKMLLANAGLEFIAITADIDERGIQAASKLSSPRDIGLLLAREKAKAVSANHPGSHVIGADQTLALGERLFNKPAGRAQAMAQLRDLAGNYHELNSAVAVAHDGKIVFEDVSVARMTMRQMSEAELSAYLDAAGDAVTTSVGAYQLEGLGIHLFERIEGDHFTILGLPLLPLLAFLRSEQLIAV.

Catalysis depends on D79, which acts as the Proton acceptor.

The protein belongs to the Maf family. A divalent metal cation serves as cofactor.

The protein localises to the cytoplasm. It catalyses the reaction a ribonucleoside 5'-triphosphate + H2O = a ribonucleoside 5'-phosphate + diphosphate + H(+). The enzyme catalyses a 2'-deoxyribonucleoside 5'-triphosphate + H2O = a 2'-deoxyribonucleoside 5'-phosphate + diphosphate + H(+). Its function is as follows. Nucleoside triphosphate pyrophosphatase. May have a dual role in cell division arrest and in preventing the incorporation of modified nucleotides into cellular nucleic acids. The chain is Nucleoside triphosphate pyrophosphatase from Bradyrhizobium diazoefficiens (strain JCM 10833 / BCRC 13528 / IAM 13628 / NBRC 14792 / USDA 110).